Consider the following 1368-residue polypeptide: DNA-directed RNA polymerase subunit beta (1368 aa).

The protein belongs to the RNA polymerase beta chain family. In terms of assembly, the RNAP catalytic core consists of 2 alpha, 1 beta, 1 beta' and 1 omega subunit. When a sigma factor is associated with the core the holoenzyme is formed, which can initiate transcription.

The catalysed reaction is RNA(n) + a ribonucleoside 5'-triphosphate = RNA(n+1) + diphosphate. Its function is as follows. DNA-dependent RNA polymerase catalyzes the transcription of DNA into RNA using the four ribonucleoside triphosphates as substrates. This is DNA-directed RNA polymerase subunit beta from Burkholderia cenocepacia (strain HI2424).